The primary structure comprises 34 residues: Photosystem I reaction center subunit XII (34 aa).

A helical membrane pass occupies residues 11–31 (VAIAFVVALIAGIAALLLSTA).

This sequence belongs to the PsaM family. In terms of assembly, the G.violaceus PSI reaction center is composed of one copy each of PsaA,B,C,D,E,F,L,M and Z, and forms trimeric complexes.

It localises to the cell inner membrane. This chain is Photosystem I reaction center subunit XII, found in Gloeobacter violaceus (strain ATCC 29082 / PCC 7421).